Reading from the N-terminus, the 544-residue chain is Methionine--tRNA ligase 2 (544 aa).

The 'HIGH' region signature appears at 10-20; the sequence is PYANGSLHLGH. Residues Cys-141, Cys-144, Cys-153, and Cys-156 each contribute to the Zn(2+) site. Residues 329–333 carry the 'KMSKS' region motif; sequence KLSTS. Thr-332 provides a ligand contact to ATP.

This sequence belongs to the class-I aminoacyl-tRNA synthetase family. MetG type 1 subfamily. In terms of assembly, monomer. Zn(2+) serves as cofactor.

The protein localises to the cytoplasm. It carries out the reaction tRNA(Met) + L-methionine + ATP = L-methionyl-tRNA(Met) + AMP + diphosphate. Its function is as follows. Is required not only for elongation of protein synthesis but also for the initiation of all mRNA translation through initiator tRNA(fMet) aminoacylation. The polypeptide is Methionine--tRNA ligase 2 (Bacillus anthracis).